The following is a 179-amino-acid chain: MSKKDKKEEIKEEVEATEPTTEESVEEVAEETSENKELQEALERAEDFENKYLRAHAEMQNIQRRANEERQSLQRYRSQDLAKAILPSLDNLERALAVEGLTDDVKKGLEMVQESLIQALKEEGVEEVELENFDPNLHMAVQTLDADDDHPADSIAQVLQKGYQLHERLLRPAMVVVYN.

A compositionally biased stretch (basic and acidic residues) spans 1–14 (MSKKDKKEEIKEEV). Residues 1-40 (MSKKDKKEEIKEEVEATEPTTEESVEEVAEETSENKELQE) form a disordered region. Positions 15–32 (EATEPTTEESVEEVAEET) are enriched in acidic residues.

The protein belongs to the GrpE family. In terms of assembly, homodimer.

It is found in the cytoplasm. Its function is as follows. Participates actively in the response to hyperosmotic and heat shock by preventing the aggregation of stress-denatured proteins, in association with DnaK and GrpE. It is the nucleotide exchange factor for DnaK and may function as a thermosensor. Unfolded proteins bind initially to DnaJ; upon interaction with the DnaJ-bound protein, DnaK hydrolyzes its bound ATP, resulting in the formation of a stable complex. GrpE releases ADP from DnaK; ATP binding to DnaK triggers the release of the substrate protein, thus completing the reaction cycle. Several rounds of ATP-dependent interactions between DnaJ, DnaK and GrpE are required for fully efficient folding. This Streptococcus mutans serotype c (strain ATCC 700610 / UA159) protein is Protein GrpE.